Reading from the N-terminus, the 64-residue chain is Large ribosomal subunit protein bL33c (64 aa).

This sequence belongs to the bacterial ribosomal protein bL33 family.

The protein resides in the plastid. The protein localises to the chloroplast. This is Large ribosomal subunit protein bL33c from Thalassiosira pseudonana (Marine diatom).